A 104-amino-acid chain; its full sequence is MATKQKIRIRLKAFDYKLIDQSAAEIVDTAKRTGAIVKGPVPLPTRFKRFDILRSPHVNKTSRDQFEIRTHQRLMDIVDPTDKTVDALMKLDLPAGVDVEIKLQ.

The protein belongs to the universal ribosomal protein uS10 family. As to quaternary structure, part of the 30S ribosomal subunit.

Functionally, involved in the binding of tRNA to the ribosomes. This is Small ribosomal subunit protein uS10 from Albidiferax ferrireducens (strain ATCC BAA-621 / DSM 15236 / T118) (Rhodoferax ferrireducens).